Reading from the N-terminus, the 220-residue chain is Putative cobalt transport protein CbiM (220 aa).

The next 6 membrane-spanning stretches (helical) occupy residues 6-26 (GFLP…VISY), 45-65 (IAVA…SVTG), 74-94 (GIAV…IVLL), 107-127 (TLGA…WVVF), 153-173 (LVTS…AGVV), and 188-208 (IPIG…IAMS).

This sequence belongs to the CbiM family. Forms an energy-coupling factor (ECF) transporter complex composed of an ATP-binding protein (A component, CbiO), a transmembrane protein (T component, CbiQ) and 2 possible substrate-capture proteins (S components, CbiM and CbiN) of unknown stoichimetry.

The protein localises to the cell membrane. Its pathway is cofactor biosynthesis; adenosylcobalamin biosynthesis. Part of the energy-coupling factor (ECF) transporter complex CbiMNOQ involved in cobalt import. This is Putative cobalt transport protein CbiM from Halobacterium salinarum (strain ATCC 29341 / DSM 671 / R1).